An 807-amino-acid chain; its full sequence is Shutoff protein (807 aa).

Residues 1 to 88 (MESVEKKDSL…QVGRGDERHG (88 aa)) form a disordered region. Polar residues predominate over residues 16-29 (FATTASTDAANAPT). Composition is skewed to basic and acidic residues over residues 59 to 70 (RSVPTEDKKQDQ) and 79 to 88 (QVGRGDERHG). The binding to host EIF4G stretch occupies residues 280–345 (VMSELIVRRA…AVLVTVELEC (66 aa)). Positions 348-466 (RFFADPEMQR…DLWTAFNERS (119 aa)) constitute an RRM domain. 2 positions are modified to phosphotyrosine; by host: Tyr-365 and Tyr-682. Residues 684–807 (DPQSGEELNP…AGTARSPTQP (124 aa)) form a disordered region. A compositionally biased stretch (gly residues) spans 726–743 (GRGGILGQSGRGGFGRGG). Positions 744 to 755 (GGHDGRLGEPRR) are enriched in basic and acidic residues. A compositionally biased stretch (basic residues) spans 756-765 (GSFRGRRGVR).

The protein belongs to the adenoviridae shutoff protein family. Monomer. Interacts with hexon protein; this interaction allows chaperoning and trimerization of hexon proteins. Interacts (via N-terminus) with host initiation factor EIF4G (via C-terminus). Interacts (via RRM domain) with viral mRNAs that contain the tripartite leader; this interaction allows ribosome shunting and expression of viral late mRNAs. In terms of processing, might be cleaved by the viral protease. Phosphorylated. Tyrosine phosphorylation enhances preferential binding to tripartite leader mRNAs and allows ribosome shunting. Post-translationally, methylated. Asymmetric dimethylation by host PRMT1 of the Arg/Gly-rich region may regulate shutoff protein binding to hexon and promote the capsid assembly in the nucleus.

The protein localises to the host cytoplasm. In terms of biological role, protein that inhibits host translation while promoting late viral translation by ribosome shunting. Blocks host cap-dependent translation by binding to eIF4G, displacing MKNK1 from cap initiation complexes and preventing EIF4E phosphorylation. Binds to the tripartite leader sequence of viral late mRNAs and recruits host eIF4G, PABPC1/poly-A binding protein and 40S ribosomes subunits on viral mRNAs, allowing ribosome shunting and efficient translation of late viral mRNAs even though conventional translation via ribosome scanning from the cap has been shut off in the host cell. During assembly, acts as a chaperone protein that helps hexon proteins assembly into trimers. The sequence is that of Shutoff protein from Homo sapiens (Human).